The primary structure comprises 128 residues: Fluoride-specific ion channel FluC (128 aa).

4 helical membrane-spanning segments follow: residues 3–23 (FSVI…RFLI), 34–54 (LFPV…GFLY), 69–89 (FITG…ETLL), and 100–120 (FLNI…AIIL). Glycine 75 and threonine 78 together coordinate Na(+).

Belongs to the fluoride channel Fluc/FEX (TC 1.A.43) family.

It is found in the cell inner membrane. It carries out the reaction fluoride(in) = fluoride(out). With respect to regulation, na(+) is not transported, but it plays an essential structural role and its presence is essential for fluoride channel function. In terms of biological role, fluoride-specific ion channel. Important for reducing fluoride concentration in the cell, thus reducing its toxicity. This is Fluoride-specific ion channel FluC from Nitratiruptor sp. (strain SB155-2).